A 174-amino-acid chain; its full sequence is Cytochrome c oxidase subunit 5A, mitochondrial (174 aa).

Residues 1–29 constitute a mitochondrion transit peptide; that stretch reads MASLTRAVTRLAIAGRQAVRTIATTTPVS.

This sequence belongs to the cytochrome c oxidase subunit 5A family. In terms of assembly, component of the cytochrome c oxidase (complex IV, CIV), a multisubunit enzyme composed of a catalytic core of 3 subunits and several supernumerary subunits. The complex exists as a monomer or a dimer and forms supercomplexes (SCs) in the inner mitochondrial membrane with ubiquinol-cytochrome c oxidoreductase (cytochrome b-c1 complex, complex III, CIII).

The protein localises to the mitochondrion inner membrane. The protein operates within energy metabolism; oxidative phosphorylation. Functionally, component of the cytochrome c oxidase, the last enzyme in the mitochondrial electron transport chain which drives oxidative phosphorylation. The respiratory chain contains 3 multisubunit complexes succinate dehydrogenase (complex II, CII), ubiquinol-cytochrome c oxidoreductase (cytochrome b-c1 complex, complex III, CIII) and cytochrome c oxidase (complex IV, CIV), that cooperate to transfer electrons derived from NADH and succinate to molecular oxygen, creating an electrochemical gradient over the inner membrane that drives transmembrane transport and the ATP synthase. Cytochrome c oxidase is the component of the respiratory chain that catalyzes the reduction of oxygen to water. Electrons originating from reduced cytochrome c in the intermembrane space (IMS) are transferred via the dinuclear copper A center (CU(A)) of subunit 2 and heme A of subunit 1 to the active site in subunit 1, a binuclear center (BNC) formed by heme A3 and copper B (CU(B)). The BNC reduces molecular oxygen to 2 water molecules using 4 electrons from cytochrome c in the IMS and 4 protons from the mitochondrial matrix. In Caenorhabditis elegans, this protein is Cytochrome c oxidase subunit 5A, mitochondrial.